We begin with the raw amino-acid sequence, 242 residues long: Vacuolar protein sorting-associated protein 28 (242 aa).

Positions 11–125 (NQDISQLFHD…ERGIPITAEH (115 aa)) constitute a VPS28 N-terminal domain. The VPS28 C-terminal domain occupies 148-242 (FNAKYVAEAT…AYKSFYALLD (95 aa)). The tract at residues 148–242 (FNAKYVAEAT…AYKSFYALLD (95 aa)) is interaction with VSP36 and VPS20.

The protein belongs to the VPS28 family. In terms of assembly, component of the ESCRT-I complex (endosomal sorting complex required for transport I) which consists of STP22, VPS28, SRN2 and MVB12 in a 1:1:1:1 stoichiometry. Self-associates. Interacts with VPS27; the interaction mediates the association with the ESCRT-0 complex. Interacts with VPS20; the interaction mediates the association with the ESCRT-III complex.

The protein resides in the cytoplasm. The protein localises to the endosome. It localises to the late endosome membrane. In terms of biological role, component of the ESCRT-I complex, a regulator of vesicular trafficking process. Required for normal endocytic and biosynthetic traffic to the yeast vacuole. The chain is Vacuolar protein sorting-associated protein 28 (VPS28) from Saccharomyces cerevisiae (strain ATCC 204508 / S288c) (Baker's yeast).